An 81-amino-acid chain; its full sequence is MKLTCVLIVALLFLTACQLTTADDSRDKQEDPLVRSHRKMQKSEDPKMAERCSNFGSDCIPATHDCCSGECFGFEDMGLCT.

An N-terminal signal peptide occupies residues 1 to 22 (MKLTCVLIVALLFLTACQLTTA). Over residues 23-34 (DDSRDKQEDPLV) the composition is skewed to basic and acidic residues. The tract at residues 23–45 (DDSRDKQEDPLVRSHRKMQKSED) is disordered. Residues 23–51 (DDSRDKQEDPLVRSHRKMQKSEDPKMAER) constitute a propeptide that is removed on maturation. 3 cysteine pairs are disulfide-bonded: Cys52-Cys67, Cys59-Cys71, and Cys66-Cys80.

It belongs to the conotoxin O1 superfamily. In terms of tissue distribution, expressed by the venom duct.

It localises to the secreted. This chain is Conotoxin ArMKLT2-0311, found in Conus arenatus (Sand-dusted cone).